Here is a 272-residue protein sequence, read N- to C-terminus: Bifunctional protein FolD 2 (272 aa).

NADP(+) contacts are provided by residues 157–159, Thr182, and Ile223; that span reads GRS.

This sequence belongs to the tetrahydrofolate dehydrogenase/cyclohydrolase family. In terms of assembly, homodimer.

The catalysed reaction is (6R)-5,10-methylene-5,6,7,8-tetrahydrofolate + NADP(+) = (6R)-5,10-methenyltetrahydrofolate + NADPH. It catalyses the reaction (6R)-5,10-methenyltetrahydrofolate + H2O = (6R)-10-formyltetrahydrofolate + H(+). Its pathway is one-carbon metabolism; tetrahydrofolate interconversion. Its function is as follows. Catalyzes the oxidation of 5,10-methylenetetrahydrofolate to 5,10-methenyltetrahydrofolate and then the hydrolysis of 5,10-methenyltetrahydrofolate to 10-formyltetrahydrofolate. This chain is Bifunctional protein FolD 2, found in Syntrophomonas wolfei subsp. wolfei (strain DSM 2245B / Goettingen).